The chain runs to 378 residues: Mannitol-1-phosphate 5-dehydrogenase (378 aa).

An NAD(+)-binding site is contributed by 4–15 (SVHFGAGNIGRG).

This sequence belongs to the mannitol dehydrogenase family.

It catalyses the reaction D-mannitol 1-phosphate + NAD(+) = beta-D-fructose 6-phosphate + NADH + H(+). The sequence is that of Mannitol-1-phosphate 5-dehydrogenase from Streptococcus pneumoniae (strain CGSP14).